The sequence spans 279 residues: Pantothenate synthetase (279 aa).

26-33 (MGNLHEGH) contributes to the ATP binding site. Catalysis depends on His-33, which acts as the Proton donor. A (R)-pantoate-binding site is contributed by Gln-57. Residue Gln-57 participates in beta-alanine binding. Position 144 to 147 (144 to 147 (GKKD)) interacts with ATP. A (R)-pantoate-binding site is contributed by Gln-150. Residues Val-173 and 181–184 (LSSR) contribute to the ATP site.

Belongs to the pantothenate synthetase family. As to quaternary structure, homodimer.

The protein localises to the cytoplasm. The enzyme catalyses (R)-pantoate + beta-alanine + ATP = (R)-pantothenate + AMP + diphosphate + H(+). It participates in cofactor biosynthesis; (R)-pantothenate biosynthesis; (R)-pantothenate from (R)-pantoate and beta-alanine: step 1/1. Its function is as follows. Catalyzes the condensation of pantoate with beta-alanine in an ATP-dependent reaction via a pantoyl-adenylate intermediate. The protein is Pantothenate synthetase of Burkholderia ambifaria (strain MC40-6).